Reading from the N-terminus, the 877-residue chain is Alanine--tRNA ligase (877 aa).

H562, H566, C664, and H668 together coordinate Zn(2+).

Belongs to the class-II aminoacyl-tRNA synthetase family. Zn(2+) is required as a cofactor.

The protein resides in the cytoplasm. The catalysed reaction is tRNA(Ala) + L-alanine + ATP = L-alanyl-tRNA(Ala) + AMP + diphosphate. Functionally, catalyzes the attachment of alanine to tRNA(Ala) in a two-step reaction: alanine is first activated by ATP to form Ala-AMP and then transferred to the acceptor end of tRNA(Ala). Also edits incorrectly charged Ser-tRNA(Ala) and Gly-tRNA(Ala) via its editing domain. This is Alanine--tRNA ligase from Synechocystis sp. (strain ATCC 27184 / PCC 6803 / Kazusa).